Here is a 413-residue protein sequence, read N- to C-terminus: Probable glucan 1,3-beta-glucosidase ARB_04467 (413 aa).

The N-terminal stretch at Met-1 to Ala-17 is a signal peptide. Substrate-binding residues include Glu-46, Glu-202, and Tyr-262. The Proton donor role is filled by Glu-202. Cys-282 and Cys-412 are joined by a disulfide. Glu-300 functions as the Nucleophile in the catalytic mechanism.

It belongs to the glycosyl hydrolase 5 (cellulase A) family. Monomer.

The protein resides in the secreted. It is found in the cell wall. It catalyses the reaction Successive hydrolysis of beta-D-glucose units from the non-reducing ends of (1-&gt;3)-beta-D-glucans, releasing alpha-glucose.. Its function is as follows. Major glucan 1,3-beta-glucosidase required for cell wall integrity. Beta-glucanases participate in the metabolism of beta-glucan, the main structural component of the cell wall. Can also function biosynthetically as a transglycosylase. Functions to deliver glucan from the cell to the extracellular matrix. Involved in cell-substrate and cell-cell adhesion. In Arthroderma benhamiae (strain ATCC MYA-4681 / CBS 112371) (Trichophyton mentagrophytes), this protein is Probable glucan 1,3-beta-glucosidase ARB_04467.